The sequence spans 253 residues: Hydroxyacylglutathione hydrolase (253 aa).

Residues His59, His61, Asp63, His64, His118, Asp143, and His181 each coordinate Zn(2+).

The protein belongs to the metallo-beta-lactamase superfamily. Glyoxalase II family. As to quaternary structure, monomer. Zn(2+) serves as cofactor.

The catalysed reaction is an S-(2-hydroxyacyl)glutathione + H2O = a 2-hydroxy carboxylate + glutathione + H(+). Its pathway is secondary metabolite metabolism; methylglyoxal degradation; (R)-lactate from methylglyoxal: step 2/2. Its function is as follows. Thiolesterase that catalyzes the hydrolysis of S-D-lactoyl-glutathione to form glutathione and D-lactic acid. The protein is Hydroxyacylglutathione hydrolase of Prochlorococcus marinus (strain SARG / CCMP1375 / SS120).